A 142-amino-acid polypeptide reads, in one-letter code: Putative nickel-responsive regulator (142 aa).

Residues histidine 77, histidine 88, histidine 90, and cysteine 96 each contribute to the Ni(2+) site.

The protein belongs to the transcriptional regulatory CopG/NikR family. As to quaternary structure, homotetramer. Requires Ni(2+) as cofactor.

Functionally, transcriptional regulator. This Halobacterium salinarum (strain ATCC 700922 / JCM 11081 / NRC-1) (Halobacterium halobium) protein is Putative nickel-responsive regulator.